Here is a 369-residue protein sequence, read N- to C-terminus: MFCVTPPELETKMNITKGGLVLFSANSNSSCMELSKKIAERLGVEMGKVQVYQEPNRETRVQIQESVRGKDVFIIQTISKDVNTTIMELLIMVYACKTSCAKSIIGVIPYFPYSKQCKMRKRGSIVSKLLASMMCKAGLTHLITMDLHQKEIQGFFNIPVDNLRASPFLLQYIQEEIPDYRNAVIVAKSPASAKRAQSFAERLRLGIAVIHGEAQDAESDLVDGRHSPPMVRSVAAIHPSLEIPMLIPKEKPPITVVGDVGGRIAIIVDDIIDDVDSFLAAAETLKERGAYKIFVMATHGLLSSDAPRLIEESAIDEVVVTNTIPHEVQKLQCPKIKTVDISMILSEAIRRIHNGESMSYLFRNIGLDD.

At Met-1 the chain carries N-acetylmethionine. Thr-5 carries the post-translational modification Phosphothreonine. Residues Ser-219, Ser-227, and Ser-233 each carry the phosphoserine modification.

Belongs to the ribose-phosphate pyrophosphokinase family. In terms of assembly, binds to PRPS1 and PRPS2.

In terms of biological role, seems to play a negative regulatory role in 5-phosphoribose 1-diphosphate synthesis. This Pongo abelii (Sumatran orangutan) protein is Phosphoribosyl pyrophosphate synthase-associated protein 2 (PRPSAP2).